Reading from the N-terminus, the 356-residue chain is Methionine import ATP-binding protein MetN 1 (356 aa).

The 240-residue stretch at 15 to 254 (IQIRALNKTY…PVQPITQELL (240 aa)) folds into the ABC transporter domain. Residue 51–58 (GKSGAGKS) participates in ATP binding.

Belongs to the ABC transporter superfamily. Methionine importer (TC 3.A.1.24) family. As to quaternary structure, the complex is composed of two ATP-binding proteins (MetN), two transmembrane proteins (MetI) and a solute-binding protein (MetQ).

The protein localises to the cell inner membrane. It catalyses the reaction L-methionine(out) + ATP + H2O = L-methionine(in) + ADP + phosphate + H(+). The enzyme catalyses D-methionine(out) + ATP + H2O = D-methionine(in) + ADP + phosphate + H(+). Part of the ABC transporter complex MetNIQ involved in methionine import. Responsible for energy coupling to the transport system. The polypeptide is Methionine import ATP-binding protein MetN 1 (Acinetobacter baylyi (strain ATCC 33305 / BD413 / ADP1)).